The chain runs to 139 residues: Non-structural protein 1 (139 aa).

Residues 136–139 (DLNP) carry the DLNP; interaction with MAP1B motif.

Belongs to the pneumovirus non-structural protein 1 family. As to quaternary structure, monomer. Homomultimer. Heteromultimer with NS2. Interacts with the matrix protein M. Interacts with host ELOC and CUL2; this interaction allows NS1 to form an active E3 ligase with ELOC and CUL2. Interacts with host IRF3; this interaction leads to the disrupted association of IRF3 with CREBBP and thus reduced binding of IRF3 to the IFN-beta promoter. Interacts with host MAVS; this interaction prevents MAVS binding to RIGI and inhibits signaling pathway leading to interferon production. Interacts with host MAP1B/microtubule-associated protein 1B. Interacts with host TRIM25 (via SPRY domain); this interaction suppresses RIGI ubiquitination and results in decreased interaction between RIGI and MAVS.

Its subcellular location is the host cytoplasm. The protein resides in the host mitochondrion. It is found in the host nucleus. Plays a major role in antagonizing the type I IFN-mediated antiviral response by degrading or inhibiting multiple cellular factors required for either IFN induction or response pathways. Acts cooperatively with NS2 to repress activation and nuclear translocation of host IFN-regulatory factor IRF3. Also disrupts the association of IRF3 with CREBBP. Interacts with host mitochondrial-associated membrane (MAM) MAVS and prevents the interaction with RIGI. Interacts with TRIM25 to suppress TRIM25-mediated RIGI ubiquitination and thereby RIGI-MAVS interaction. Together with NS2, participates in the proteasomal degradation of host STAT2, IRF3, IRF7, TBK1 and RIGI through a NS-degradasome involving CUL2 and Elongin-C. The degradasome requires an intact mitochondrial MAVS. Decreases the levels of host TRAF3 and IKBKE/IKK-epsilon. As functions other than disruptions of the type I IFN-mediated antiviral signaling pathways, induces host SOCS1 and SOCS3 expression. Suppresses premature apoptosis by an NF-kappa-B-dependent, interferon-independent mechanism and thus facilitates virus growth. Additionally, NS1 may serve some inhibitory role in viral transcription and RNA replication. Suppresses proliferation and activation of host CD103+ CD8+ cytotoxic T-lymphocytes and Th17 helper T-lymphocytes. This chain is Non-structural protein 1 (1C), found in Homo sapiens (Human).